Here is a 330-residue protein sequence, read N- to C-terminus: GTPase Obg (330 aa).

The region spanning 1–159 (MNFIDEVKIY…MWIHLSLKLL (159 aa)) is the Obg domain. In terms of domain architecture, OBG-type G spans 160 to 327 (SDVGLVGLPN…IVKLALKIIK (168 aa)). GTP contacts are provided by residues 166 to 173 (GLPNAGKS), 191 to 195 (FTTLV), 212 to 215 (DIPG), 279 to 282 (NKCD), and 308 to 310 (STY). The Mg(2+) site is built by serine 173 and threonine 193.

Belongs to the TRAFAC class OBG-HflX-like GTPase superfamily. OBG GTPase family. As to quaternary structure, monomer. Mg(2+) is required as a cofactor.

Its subcellular location is the cytoplasm. An essential GTPase which binds GTP, GDP and possibly (p)ppGpp with moderate affinity, with high nucleotide exchange rates and a fairly low GTP hydrolysis rate. Plays a role in control of the cell cycle, stress response, ribosome biogenesis and in those bacteria that undergo differentiation, in morphogenesis control. The protein is GTPase Obg of Rickettsia akari (strain Hartford).